Here is a 63-residue protein sequence, read N- to C-terminus: Small ribosomal subunit protein bS21 (63 aa).

Residues 40–52 (KPSVKRKLKSEAA) are compositionally biased toward basic and acidic residues. Residues 40-63 (KPSVKRKLKSEAARKRKNKRGRRY) form a disordered region. The segment covering 53 to 63 (RKRKNKRGRRY) has biased composition (basic residues).

This sequence belongs to the bacterial ribosomal protein bS21 family.

The sequence is that of Small ribosomal subunit protein bS21 from Limosilactobacillus reuteri (strain DSM 20016) (Lactobacillus reuteri).